The primary structure comprises 548 residues: Glucose-6-phosphate isomerase (548 aa).

E355 serves as the catalytic Proton donor. Active-site residues include H386 and K514.

Belongs to the GPI family.

It localises to the cytoplasm. It catalyses the reaction alpha-D-glucose 6-phosphate = beta-D-fructose 6-phosphate. Its pathway is carbohydrate biosynthesis; gluconeogenesis. It functions in the pathway carbohydrate degradation; glycolysis; D-glyceraldehyde 3-phosphate and glycerone phosphate from D-glucose: step 2/4. Catalyzes the reversible isomerization of glucose-6-phosphate to fructose-6-phosphate. This Yersinia pestis (strain Pestoides F) protein is Glucose-6-phosphate isomerase.